The chain runs to 582 residues: 2-succinyl-5-enolpyruvyl-6-hydroxy-3-cyclohexene-1-carboxylate synthase (582 aa).

It belongs to the TPP enzyme family. MenD subfamily. In terms of assembly, homodimer. Mg(2+) is required as a cofactor. Requires Mn(2+) as cofactor. The cofactor is thiamine diphosphate.

The catalysed reaction is isochorismate + 2-oxoglutarate + H(+) = 5-enolpyruvoyl-6-hydroxy-2-succinyl-cyclohex-3-ene-1-carboxylate + CO2. It participates in quinol/quinone metabolism; 1,4-dihydroxy-2-naphthoate biosynthesis; 1,4-dihydroxy-2-naphthoate from chorismate: step 2/7. Its pathway is cofactor biosynthesis; phylloquinone biosynthesis. Its function is as follows. Catalyzes the thiamine diphosphate-dependent decarboxylation of 2-oxoglutarate and the subsequent addition of the resulting succinic semialdehyde-thiamine pyrophosphate anion to isochorismate to yield 2-succinyl-5-enolpyruvyl-6-hydroxy-3-cyclohexene-1-carboxylate (SEPHCHC). In Trichodesmium erythraeum (strain IMS101), this protein is 2-succinyl-5-enolpyruvyl-6-hydroxy-3-cyclohexene-1-carboxylate synthase.